We begin with the raw amino-acid sequence, 55 residues long: Large ribosomal subunit protein bL33 (55 aa).

This sequence belongs to the bacterial ribosomal protein bL33 family.

The polypeptide is Large ribosomal subunit protein bL33 (Pseudarthrobacter chlorophenolicus (strain ATCC 700700 / DSM 12829 / CIP 107037 / JCM 12360 / KCTC 9906 / NCIMB 13794 / A6) (Arthrobacter chlorophenolicus)).